A 390-amino-acid polypeptide reads, in one-letter code: Ketoisovalerate reductase BEA2 (390 aa).

70-75 (GPGNIG) contributes to the NADP(+) binding site. K285 (proton donor) is an active-site residue. Positions 289 and 293 each coordinate substrate.

This sequence belongs to the ketopantoate reductase family.

It carries out the reaction (R)-2-hydroxy-3-methylbutanoate + NADP(+) = 3-methyl-2-oxobutanoate + NADPH + H(+). The reductase activity is increased by Mg(2+) (195%), Ca(2+) (169%) and slightly increased by K(+) (123%). The reduction activity is inhibited by Fe(2+) and Co(2+), and almost totally inhibited by Cu(2+), Mn(2+), Zn(2+) and Fe(3+) (from 3% to 9% residual activity respectively). The chelating agent EDTA had little effect, suggesting Mg(2+) and Ca(2+) are not determining factors, though they could promote the reductase enzyme activity. Ketoisovalerate reductase; part of the gene cluster that mediates the biosynthesis of beauvericin (BEA), a non-ribosomal cyclic hexadepsipeptide that shows antibiotic, antifungal, insecticidal, and cancer cell antiproliferative and antihaptotactic activity. Ketoisovalerate reductase BEA2 catalyzes the NADPH-specific reduction of ketoisovaleric acid to hydroxyisovalerate, a precursor for beauvericin biosynthesis. The nonribosomal cyclodepsipeptide synthetase BEA1 then catalyzes the formation of beauvericin via condensation and cyclization of 3 dipeptidol monomers, each composed of one unit of hydroxyisovalerate and one unit of N-methyl-phenylalanine. The polypeptide is Ketoisovalerate reductase BEA2 (Gibberella intermedia (Bulb rot disease fungus)).